The sequence spans 386 residues: Hemagglutinin-esterase (386 aa).

The N-terminal stretch at 1–11 (MLIIFLFFYFC) is a signal peptide. The tract at residues 1-121 (MLIIFLFFYF…SNDVWLLNKV (121 aa)) is esterase domain 1. Over 12-359 (YGFNEPLNVV…PICVYDFLPI (348 aa)) the chain is Virion surface. Residue serine 34 is the Nucleophile of the active site. A disulfide bridge links cysteine 38 with cysteine 59. Residues asparagine 83, asparagine 110, asparagine 145, and asparagine 168 are each glycosylated (N-linked (GlcNAc...) asparagine; by host). A disulfide bridge links cysteine 107 with cysteine 154. The interval 122-236 (RFYRALYSNM…GSYKVSTTAP (115 aa)) is receptor binding. Disulfide bonds link cysteine 180–cysteine 246, cysteine 188–cysteine 219, and cysteine 277–cysteine 282. The interval 237–349 (FLSLPTKALC…RCPTSSIIKH (113 aa)) is esterase domain 2. N-linked (GlcNAc...) asparagine; by host glycosylation is present at asparagine 286. Active-site charge relay system residues include aspartate 296 and histidine 299. Cysteine 317 and cysteine 341 are joined by a disulfide. Asparagine 328 carries an N-linked (GlcNAc...) asparagine; by host glycan. The chain crosses the membrane as a helical span at residues 360 to 380 (ILQGILLCLALLFVVFLLFLL). Over 381-386 (YNDKSH) the chain is Intravirion.

The protein belongs to the influenza type C/coronaviruses hemagglutinin-esterase family. Homodimer; disulfide-linked. Forms a complex with the M protein in the pre-Golgi. Associates then with S-M complex to form a ternary complex S-M-HE. In terms of processing, N-glycosylated in the host RER.

It localises to the virion membrane. The protein localises to the host cell membrane. It carries out the reaction N-acetyl-9-O-acetylneuraminate + H2O = N-acetylneuraminate + acetate + H(+). The catalysed reaction is N-acetyl-4-O-acetylneuraminate + H2O = N-acetylneuraminate + acetate + H(+). In terms of biological role, structural protein that makes short spikes at the surface of the virus. Contains receptor binding and receptor-destroying activities. Mediates de-O-acetylation of N-acetyl-4-O-acetylneuraminic acid, which is probably the receptor determinant recognized by the virus on the surface of erythrocytes and susceptible cells. This receptor-destroying activity is important for virus release as it probably helps preventing self-aggregation and ensures the efficient spread of the progeny virus from cell to cell. May serve as a secondary viral attachment protein for initiating infection, the spike protein being the major one. May become a target for both the humoral and the cellular branches of the immune system. The polypeptide is Hemagglutinin-esterase (Homo sapiens (Human)).